The following is a 1027-amino-acid chain: Kinesin heavy chain isoform 5A (1027 aa).

Ala-2 carries the post-translational modification N-acetylalanine. The Kinesin motor domain maps to Ser-9–Ile-327. Residue Gly-86–Thr-93 participates in ATP binding. Residues Val-174–Lys-315 form a microtubule-binding region. Residues Glu-271–Ala-361 form a necessary for interaction with ZFYVE27 region. The stretch at Ala-331–Arg-905 forms a coiled coil. Residues Thr-353–Ser-1027 are interaction with BICD2. Position 397 is a phosphothreonine (Thr-397). A disordered region spans residues Tyr-906–Tyr-936. A globular region spans residues Lys-907–Ser-1027.

The protein belongs to the TRAFAC class myosin-kinesin ATPase superfamily. Kinesin family. Kinesin subfamily. As to quaternary structure, oligomer composed of two heavy chains and two light chains. Interacts with GRIP1. Interacts with FMR1 (via C-terminus); this interaction is increased in a mGluR-dependent manner. Interacts with BORCS5. Interacts with ZFYVE27. Interacts with VAPA, VAPB, SURF4, RAB11A (GDP-bound form), RAB11B (GDP-bound form) and RTN3 in a ZFYVE27-dependent manner. Interacts with BICD2. Interacts with DTNB. Expressed in brain.

Its subcellular location is the cytoplasm. It is found in the perinuclear region. It localises to the cytoskeleton. The protein localises to the perikaryon. The catalysed reaction is ATP + H2O + a kinesin associated with a microtubule at position (n) = ADP + phosphate a kinesin associated with a microtubule at position (n+1, toward the plus end).. Microtubule-dependent motor required for slow axonal transport of neurofilament proteins (NFH, NFM and NFL). Can induce formation of neurite-like membrane protrusions in non-neuronal cells in a ZFYVE27-dependent manner. The ZFYVE27-KIF5A complex contributes to the vesicular transport of VAPA, VAPB, SURF4, RAB11A, RAB11B and RTN3 proteins in neurons. Required for anterograde axonal transportation of MAPK8IP3/JIP3 which is essential for MAPK8IP3/JIP3 function in axon elongation. The chain is Kinesin heavy chain isoform 5A from Rattus norvegicus (Rat).